A 322-amino-acid polypeptide reads, in one-letter code: MQNRKTYAYDWIKKWMIKSISTLIIINTMVWSSVSEAYPIFAQQGYENPREATGRIVCANCHLAKKPVDIEVPQSVLPDTVFEAVVKIPYDTQVKQVLANGKKGALNVGAVLILPEGFELAPSNRVPPEMKEKIGNLYFQSYRPDKKNILVVGPVPGKKYSEIIFPILAPNPATNKDAHFLKYPIYVGGNRGRGQIYPDGSKSNNTVYNASTTGIIKKVLRKEKGGYEIIIDNTLDGRQVIDIVPPGPELIISEGESIKVDQPLTNNPNVGGFGQGDAEIVLQDVLRVQGLLLFFASVILAQIFLVLKKKQFEKVQLAEMNF.

Positions 1–37 are cleaved as a signal peptide; it reads MQNRKTYAYDWIKKWMIKSISTLIIINTMVWSSVSEA. Residues tyrosine 38, cysteine 58, cysteine 61, and histidine 62 each coordinate heme. A helical membrane pass occupies residues 285 to 307; sequence VLRVQGLLLFFASVILAQIFLVL.

This sequence belongs to the cytochrome f family. As to quaternary structure, the 4 large subunits of the cytochrome b6-f complex are cytochrome b6, subunit IV (17 kDa polypeptide, petD), cytochrome f and the Rieske protein, while the 4 small subunits are PetG, PetL, PetM and PetN. The complex functions as a dimer. It depends on heme as a cofactor.

It is found in the plastid. Its subcellular location is the chloroplast thylakoid membrane. In terms of biological role, component of the cytochrome b6-f complex, which mediates electron transfer between photosystem II (PSII) and photosystem I (PSI), cyclic electron flow around PSI, and state transitions. The protein is Cytochrome f (petA) of Anthoceros angustus (Hornwort).